An 868-amino-acid chain; its full sequence is Receptor-like protein kinase At5g59670 (868 aa).

Positions 1-22 (MESSFGLLLALLTLTIIHIVQA) are cleaved as a signal peptide. The Extracellular portion of the chain corresponds to 23 to 500 (QDPQGFISLD…PRLIKPPKKE (478 aa)). Asparagine 38, asparagine 94, asparagine 141, asparagine 287, asparagine 300, asparagine 372, asparagine 405, asparagine 416, asparagine 423, asparagine 445, asparagine 464, and asparagine 471 each carry an N-linked (GlcNAc...) asparagine glycan. LRR repeat units lie at residues 409–432 (PPRITSLNLSSSRLNGTIAAAIQS), 433–459 (ITQLETLDLSYNNLTGEVPEFLGKMKS), and 461–481 (SVINLSGNNLNGSIPQALRKK). Residues 501–521 (FPVAIVTLVVFVTVIVVLFLV) form a helical membrane-spanning segment. Residues 522–868 (FRKKMSTIVK…LDTTAVPMAR (347 aa)) are Cytoplasmic-facing. Phosphothreonine is present on threonine 555. The region spanning 564–834 (KNFQRVLGKG…SMSQVIHELK (271 aa)) is the Protein kinase domain. Residues 570–578 (LGKGGFGMV) and lysine 592 each bind ATP. Tyrosine 637 is subject to Phosphotyrosine. Aspartate 689 serves as the catalytic Proton acceptor. Serine 723 is modified (phosphoserine). Threonine 724 and threonine 729 each carry phosphothreonine.

Belongs to the protein kinase superfamily. Ser/Thr protein kinase family. Autophosphorylated on Tyr and Thr residues.

Its subcellular location is the cell membrane. The catalysed reaction is L-seryl-[protein] + ATP = O-phospho-L-seryl-[protein] + ADP + H(+). It carries out the reaction L-threonyl-[protein] + ATP = O-phospho-L-threonyl-[protein] + ADP + H(+). It catalyses the reaction L-tyrosyl-[protein] + ATP = O-phospho-L-tyrosyl-[protein] + ADP + H(+). Probable receptor with a dual specificity kinase activity acting on both serine/threonine- and tyrosine-containing substrates. The sequence is that of Receptor-like protein kinase At5g59670 from Arabidopsis thaliana (Mouse-ear cress).